The sequence spans 380 residues: MAPNLRKSHPLLKMVNNSLIDLPTPSNISAWWNFGSLLGICLATQILTGLLLAAHYTADTTLAFSSVAHTCRNVQHGWLIRNLHANGASFFFICIYLHIGRGLYYGSYLYKETWNTGVILLLTLMATAFVGYVLPWGQMSFWGATVITNLFSAVPYIGQTLVEWAWGGFSVDNPTLTRFFTLHFLLPFMIMGLTLIHLTFLHESGSNNPLGIVSNCDKIPFHPYFSLKDILGFMLMLLPLMTLALFSPNLLGDPENFPPANPLVTPPYIKPEWYFLFAYAILRSIPNKLGGVLALAASVLILFLAPLLHKSKQRTMTFRPLSQLLFWTLTANLLILTWVGSQPVEHPFMIIGQLASLTYFTILLVLFPITGALENKMLNY.

The next 4 helical transmembrane spans lie at 34-54, 78-99, 114-134, and 179-199; these read FGSL…LLAA, WLIR…YLHI, WNTG…GYVL, and FFTL…IHLT. Heme b contacts are provided by histidine 84 and histidine 98. Positions 183 and 197 each coordinate heme b. Histidine 202 contacts a ubiquinone. The next 4 helical transmembrane spans lie at 227–247, 289–309, 321–341, and 348–368; these read LKDI…ALFS, LGGV…PLLH, LSQL…WVGS, and FMII…VLFP.

The protein belongs to the cytochrome b family. In terms of assembly, the cytochrome bc1 complex contains 11 subunits: 3 respiratory subunits (MT-CYB, CYC1 and UQCRFS1), 2 core proteins (UQCRC1 and UQCRC2) and 6 low-molecular weight proteins (UQCRH/QCR6, UQCRB/QCR7, UQCRQ/QCR8, UQCR10/QCR9, UQCR11/QCR10 and a cleavage product of UQCRFS1). This cytochrome bc1 complex then forms a dimer. Requires heme b as cofactor.

It is found in the mitochondrion inner membrane. Component of the ubiquinol-cytochrome c reductase complex (complex III or cytochrome b-c1 complex) that is part of the mitochondrial respiratory chain. The b-c1 complex mediates electron transfer from ubiquinol to cytochrome c. Contributes to the generation of a proton gradient across the mitochondrial membrane that is then used for ATP synthesis. This is Cytochrome b (MT-CYB) from Anthropoides virgo (Demoiselle crane).